Here is a 343-residue protein sequence, read N- to C-terminus: Aldehyde reductase 2 (343 aa).

Y177 provides a ligand contact to NADP(+).

It belongs to the NAD(P)-dependent epimerase/dehydratase family. Dihydroflavonol-4-reductase subfamily. As to quaternary structure, monomer.

The catalysed reaction is a primary alcohol + NADP(+) = an aldehyde + NADPH + H(+). Its activity is regulated as follows. Inhibited by quercetin and diphenylhydantoin. In terms of biological role, catalyzes the asymmetric reduction of o-substituted aliphatic and aromatic aldehydes and ketones to an S-enantiomer. Reduces ethyl 4-chloro-3-oxobutanoate to ethyl (S)-4-chloro-3-hydroxybutanoate. This is Aldehyde reductase 2 from Sporidiobolus salmonicolor (Yeast-like fungus).